The following is a 227-amino-acid chain: Probable methylthioribulose-1-phosphate dehydratase (227 aa).

Cys-87 contacts substrate. Residues His-105 and His-107 each coordinate Zn(2+). Glu-129 serves as the catalytic Proton donor/acceptor. Zn(2+) is bound at residue His-185.

It belongs to the aldolase class II family. MtnB subfamily. Requires Zn(2+) as cofactor.

It localises to the cytoplasm. It carries out the reaction 5-(methylsulfanyl)-D-ribulose 1-phosphate = 5-methylsulfanyl-2,3-dioxopentyl phosphate + H2O. Its pathway is amino-acid biosynthesis; L-methionine biosynthesis via salvage pathway; L-methionine from S-methyl-5-thio-alpha-D-ribose 1-phosphate: step 2/6. Functionally, catalyzes the dehydration of methylthioribulose-1-phosphate (MTRu-1-P) into 2,3-diketo-5-methylthiopentyl-1-phosphate (DK-MTP-1-P). The chain is Probable methylthioribulose-1-phosphate dehydratase from Drosophila melanogaster (Fruit fly).